The following is a 196-amino-acid chain: Pyridoxal 5'-phosphate synthase subunit PdxT (196 aa).

52–54 (GES) is an L-glutamine binding site. The active-site Nucleophile is the cysteine 84. Residues arginine 113 and 141–142 (IR) each bind L-glutamine. Catalysis depends on charge relay system residues histidine 178 and glutamate 180.

The protein belongs to the glutaminase PdxT/SNO family. As to quaternary structure, in the presence of PdxS, forms a dodecamer of heterodimers. Only shows activity in the heterodimer.

It catalyses the reaction aldehydo-D-ribose 5-phosphate + D-glyceraldehyde 3-phosphate + L-glutamine = pyridoxal 5'-phosphate + L-glutamate + phosphate + 3 H2O + H(+). The enzyme catalyses L-glutamine + H2O = L-glutamate + NH4(+). Its pathway is cofactor biosynthesis; pyridoxal 5'-phosphate biosynthesis. Catalyzes the hydrolysis of glutamine to glutamate and ammonia as part of the biosynthesis of pyridoxal 5'-phosphate. The resulting ammonia molecule is channeled to the active site of PdxS. This is Pyridoxal 5'-phosphate synthase subunit PdxT from Pyrococcus horikoshii (strain ATCC 700860 / DSM 12428 / JCM 9974 / NBRC 100139 / OT-3).